A 90-amino-acid chain; its full sequence is Arminin 7722 (90 aa).

A signal peptide spans methionine 1–alanine 18. Residues arginine 19–alanine 59 constitute a propeptide that is removed on maturation. Threonine 87 carries the threonine amide modification.

Belongs to the arminin family. As to expression, expressed in entodermal epithelium along the body column.

It is found in the secreted. It localises to the target cell membrane. Functionally, antimicrobial peptide with a broad-spectrum antimicrobial activity. Keeps its antibacterial activity under a wide range of salt concentrations that mimic physiological conditions of human blood, which is surprising, since Hydra is an obligate freshwater animal with nearly no salt tolerance. Does not affect red blood cells. The polypeptide is Arminin 7722 (Hydra vulgaris (Hydra)).